We begin with the raw amino-acid sequence, 205 residues long: Putative 3-methyladenine DNA glycosylase (205 aa).

This sequence belongs to the DNA glycosylase MPG family.

In Bacillus cereus (strain ATCC 10987 / NRS 248), this protein is Putative 3-methyladenine DNA glycosylase.